We begin with the raw amino-acid sequence, 424 residues long: Serine--tRNA ligase (424 aa).

231–233 lines the L-serine pocket; sequence TAE. 262–264 lines the ATP pocket; that stretch reads RSE. Glutamate 285 contributes to the L-serine binding site. 349-352 contacts ATP; the sequence is EISS. Serine 385 lines the L-serine pocket.

The protein belongs to the class-II aminoacyl-tRNA synthetase family. Type-1 seryl-tRNA synthetase subfamily. As to quaternary structure, homodimer. The tRNA molecule binds across the dimer.

The protein localises to the cytoplasm. It carries out the reaction tRNA(Ser) + L-serine + ATP = L-seryl-tRNA(Ser) + AMP + diphosphate + H(+). The catalysed reaction is tRNA(Sec) + L-serine + ATP = L-seryl-tRNA(Sec) + AMP + diphosphate + H(+). It functions in the pathway aminoacyl-tRNA biosynthesis; selenocysteinyl-tRNA(Sec) biosynthesis; L-seryl-tRNA(Sec) from L-serine and tRNA(Sec): step 1/1. Its function is as follows. Catalyzes the attachment of serine to tRNA(Ser). Is also able to aminoacylate tRNA(Sec) with serine, to form the misacylated tRNA L-seryl-tRNA(Sec), which will be further converted into selenocysteinyl-tRNA(Sec). The polypeptide is Serine--tRNA ligase (Bacillus cereus (strain AH187)).